The primary structure comprises 66 residues: Ocellatin-PT3 (66 aa).

The signal sequence occupies residues 1-22 (MAFLKKSLFLVLFLGLVSLSIC). Residues 23 to 39 (DEEKRQDEDDDDDDDEE) constitute a propeptide that is removed on maturation. Position 66 is a valine amide (valine 66).

As to expression, expressed by the skin glands.

The protein resides in the secreted. Functionally, has antibacterial activity against Gram-negative bacterium E.coli ATCC 25922 (MIC=320 uM) but not against S.pneumoniae ATCC 700603, S.choleraesuis ATCC 14028 or Gram-positive bacterium S.aureus ATCC 29313. Shows no hemolytic activity and no cytotoxicity. The protein is Ocellatin-PT3 of Leptodactylus pustulatus (Ceara white-lipped frog).